The sequence spans 328 residues: Mannitol-1-phosphate 5-dehydrogenase (328 aa).

3-14 (LIHFGAGNIGCG) provides a ligand contact to NAD(+).

The protein belongs to the mannitol dehydrogenase family.

It carries out the reaction D-mannitol 1-phosphate + NAD(+) = beta-D-fructose 6-phosphate + NADH + H(+). The protein is Mannitol-1-phosphate 5-dehydrogenase (mtlD) of Mycoplasma mycoides subsp. mycoides SC (strain CCUG 32753 / NCTC 10114 / PG1).